The primary structure comprises 409 residues: Broad specificity amino-acid racemase (409 aa).

The N-terminal stretch at 1-24 (MPFRRTLLAASLALLITGQAPLYA) is a signal peptide. A disulfide bridge links cysteine 71 with cysteine 97. Lysine 75 serves as the catalytic Proton acceptor. Lysine 75 bears the N6-(pyridoxal phosphate)lysine mark. Position 174 (arginine 174) interacts with substrate. Tyrosine 301 functions as the Proton acceptor in the catalytic mechanism. Residue methionine 349 participates in substrate binding.

This sequence belongs to the alanine racemase family. Bsr subfamily. Pyridoxal 5'-phosphate is required as a cofactor.

It localises to the periplasm. The catalysed reaction is an L-alpha-amino acid = a D-alpha-amino acid. It carries out the reaction L-lysine = D-lysine. The enzyme catalyses L-arginine = D-arginine. It catalyses the reaction L-glutamine = D-glutamine. In terms of biological role, amino-acid racemase able to utilize a broad range of substrates. Reversibly racemizes 9 of the 19 natural chiral amino acids known, including both positively charged amino acids (Lys, Arg and His) and non-beta-branched aliphatic amino acids (Ala, Leu, Met, Ser, Gln and Asn). Among these amino acids, activity is the highest with lysine and arginine, and poor or very poor with the others. Plays a primary role in the catabolism of basic amino acid, that allows P.putida strain KT2440 to grow on L-Lys and L-Arg as the sole source of carbon and nitrogen, through conversion to their respective D-enantiomers. In Pseudomonas putida (strain ATCC 47054 / DSM 6125 / CFBP 8728 / NCIMB 11950 / KT2440), this protein is Broad specificity amino-acid racemase.